Reading from the N-terminus, the 221-residue chain is Thiamine-phosphate synthase (221 aa).

Residues 44 to 48 (QFREK) and N79 contribute to the 4-amino-2-methyl-5-(diphosphooxymethyl)pyrimidine site. Residues D80 and D99 each contribute to the Mg(2+) site. S117 contributes to the 4-amino-2-methyl-5-(diphosphooxymethyl)pyrimidine binding site. 143 to 145 (TRS) contacts 2-[(2R,5Z)-2-carboxy-4-methylthiazol-5(2H)-ylidene]ethyl phosphate. Residue K146 participates in 4-amino-2-methyl-5-(diphosphooxymethyl)pyrimidine binding. 2-[(2R,5Z)-2-carboxy-4-methylthiazol-5(2H)-ylidene]ethyl phosphate-binding positions include G175 and 195 to 196 (IS).

It belongs to the thiamine-phosphate synthase family. Mg(2+) is required as a cofactor.

The catalysed reaction is 2-[(2R,5Z)-2-carboxy-4-methylthiazol-5(2H)-ylidene]ethyl phosphate + 4-amino-2-methyl-5-(diphosphooxymethyl)pyrimidine + 2 H(+) = thiamine phosphate + CO2 + diphosphate. The enzyme catalyses 2-(2-carboxy-4-methylthiazol-5-yl)ethyl phosphate + 4-amino-2-methyl-5-(diphosphooxymethyl)pyrimidine + 2 H(+) = thiamine phosphate + CO2 + diphosphate. It carries out the reaction 4-methyl-5-(2-phosphooxyethyl)-thiazole + 4-amino-2-methyl-5-(diphosphooxymethyl)pyrimidine + H(+) = thiamine phosphate + diphosphate. The protein operates within cofactor biosynthesis; thiamine diphosphate biosynthesis; thiamine phosphate from 4-amino-2-methyl-5-diphosphomethylpyrimidine and 4-methyl-5-(2-phosphoethyl)-thiazole: step 1/1. In terms of biological role, condenses 4-methyl-5-(beta-hydroxyethyl)thiazole monophosphate (THZ-P) and 2-methyl-4-amino-5-hydroxymethyl pyrimidine pyrophosphate (HMP-PP) to form thiamine monophosphate (TMP). The polypeptide is Thiamine-phosphate synthase (Geobacillus thermodenitrificans (strain NG80-2)).